Here is a 181-residue protein sequence, read N- to C-terminus: Large ribosomal subunit protein uL10 (181 aa).

Belongs to the universal ribosomal protein uL10 family. In terms of assembly, part of the ribosomal stalk of the 50S ribosomal subunit. The N-terminus interacts with L11 and the large rRNA to form the base of the stalk. The C-terminus forms an elongated spine to which L12 dimers bind in a sequential fashion forming a multimeric L10(L12)X complex.

Its function is as follows. Forms part of the ribosomal stalk, playing a central role in the interaction of the ribosome with GTP-bound translation factors. The polypeptide is Large ribosomal subunit protein uL10 (Trichormus variabilis (strain ATCC 29413 / PCC 7937) (Anabaena variabilis)).